The chain runs to 214 residues: MNNETTTLISLKEAMKRVDHKLQALETQFKELDFTKDNLMQKFEHHSKALASQAAQDEMWTAVRALQLTSMELNILYSYVIEVLICLHTRVLEKLPDLVRGLPTLASVLRRKVKNKRVRVVWESILEECGLQEGDITALCTFFIARGNKAEHYTAKVRQMYIRDVTFLITNMVKNQALQDSLLRAVQVIEKGKAVRTPEKQKSSLEELIPSVKN.

Residues 6–42 (TTLISLKEAMKRVDHKLQALETQFKELDFTKDNLMQK) adopt a coiled-coil conformation. A helical membrane pass occupies residues 65–81 (ALQLTSMELNILYSYVI).

It localises to the membrane. This Homo sapiens (Human) protein is Single-pass membrane and coiled-coil domain-containing protein 1 (SMCO1).